The primary structure comprises 367 residues: UDP-N-acetylglucosamine--N-acetylmuramyl-(pentapeptide) pyrophosphoryl-undecaprenol N-acetylglucosamine transferase (367 aa).

UDP-N-acetyl-alpha-D-glucosamine contacts are provided by residues 13-15, Asn127, Arg168, Ser200, Ile251, and Gln296; that span reads TGG.

This sequence belongs to the glycosyltransferase 28 family. MurG subfamily.

The protein resides in the cell inner membrane. The enzyme catalyses di-trans,octa-cis-undecaprenyl diphospho-N-acetyl-alpha-D-muramoyl-L-alanyl-D-glutamyl-meso-2,6-diaminopimeloyl-D-alanyl-D-alanine + UDP-N-acetyl-alpha-D-glucosamine = di-trans,octa-cis-undecaprenyl diphospho-[N-acetyl-alpha-D-glucosaminyl-(1-&gt;4)]-N-acetyl-alpha-D-muramoyl-L-alanyl-D-glutamyl-meso-2,6-diaminopimeloyl-D-alanyl-D-alanine + UDP + H(+). Its pathway is cell wall biogenesis; peptidoglycan biosynthesis. In terms of biological role, cell wall formation. Catalyzes the transfer of a GlcNAc subunit on undecaprenyl-pyrophosphoryl-MurNAc-pentapeptide (lipid intermediate I) to form undecaprenyl-pyrophosphoryl-MurNAc-(pentapeptide)GlcNAc (lipid intermediate II). In Flavobacterium psychrophilum (strain ATCC 49511 / DSM 21280 / CIP 103535 / JIP02/86), this protein is UDP-N-acetylglucosamine--N-acetylmuramyl-(pentapeptide) pyrophosphoryl-undecaprenol N-acetylglucosamine transferase.